The following is a 147-amino-acid chain: Flagellar assembly factor FliW (147 aa).

It belongs to the FliW family. Interacts with translational regulator CsrA and flagellin(s).

It is found in the cytoplasm. Acts as an anti-CsrA protein, binds CsrA and prevents it from repressing translation of its target genes, one of which is flagellin. Binds to flagellin and participates in the assembly of the flagellum. The protein is Flagellar assembly factor FliW of Chromobacterium violaceum (strain ATCC 12472 / DSM 30191 / JCM 1249 / CCUG 213 / NBRC 12614 / NCIMB 9131 / NCTC 9757 / MK).